The sequence spans 3788 residues: Lysosomal-trafficking regulator (3788 aa).

2 disordered regions span residues 148–180 and 198–217; these read KSTH…TVVS and EGHL…VLSD. Ser164 is subject to Phosphoserine. Thr165 is subject to Phosphothreonine. Position 166 is a phosphoserine (Ser166). The stretch at 662-700 is one WD 1 repeat; the sequence is GPTSGLPSPSYRFQGILPSSGSEDLLWKWDALEAYQSFV. 3 disordered regions span residues 1169 to 1196, 1213 to 1240, and 1482 to 1519; these read LGPG…FSEE, GYEA…EAEG, and ESAA…TESI. Residues 1213–1232 are compositionally biased toward acidic residues; that stretch reads GYEADSESNPEDVDTQDDGV. 2 positions are modified to phosphoserine: Ser1503 and Ser1504. Residues 1576–1620 form a WD 2 repeat; it reads SQENIFFPSKWQHLVLTYIQHPQGKKNVHGEISIWVSGQRKTDVI. Residues Ser2099, Ser2118, Ser2203, Ser2207, and Ser2254 each carry the phosphoserine modification. A disordered region spans residues 2177–2221; that stretch reads ANGVSRGSPRFPRARVDHKDVGTEPRSDDDSPGDESYPRRPDNLK. Basic and acidic residues predominate over residues 2190 to 2205; it reads ARVDHKDVGTEPRSDD. Disordered stretches follow at residues 2556-2581 and 2659-2681; these read HDSE…SIAG and NTSQ…HHEQ. The span at 2566–2578 shows a compositional bias: basic residues; it reads SAHRHSVPPKRRS. Positions 2659–2671 are enriched in polar residues; the sequence is NTSQSKTSVSQTE. Residues 2996 to 3102 enclose the BEACH-type PH domain; that stretch reads AASESIRVNR…VRDDVYQSIL (107 aa). Residues 3126 to 3409 enclose the BEACH domain; that stretch reads QITNFEYLTH…QLFHTAHASR (284 aa). WD repeat units follow at residues 3550-3589, 3601-3640, 3643-3686, 3687-3731, and 3736-3775; these read SQQH…STPS, GHTE…YVQS, GHKS…VGHV, HCRE…PVRE, and KSNK…RVKL.

Interacts with CPAP, LIP8 and ZNF521. In terms of tissue distribution, expressed in the heart, lung, liver, spleen, brain and in different immune cell types (purified B and T lymphocytes, bone marrow-derived macrophages and dendritic cells).

Its subcellular location is the cytoplasm. Functionally, adapter protein that regulates and/or fission of intracellular vesicles such as lysosomes. Might regulate trafficking of effectors involved in exocytosis. In cytotoxic T-cells and natural killer (NK) cells, has role in the regulation of size, number and exocytosis of lytic granules. In macrophages and dendritic cells, regulates phagosome maturation by controlling the conversion of early phagosomal compartments into late phagosomes. In macrophages and dendritic cells, specifically involved in TLR3- and TLR4-induced production of pro-inflammatory cytokines by regulating the endosomal TLR3- TICAM1/TRIF and TLR4- TICAM1/TRIF signaling pathways. This chain is Lysosomal-trafficking regulator (Lyst), found in Mus musculus (Mouse).